Consider the following 82-residue polypeptide: ATP synthase subunit c, chloroplastic (82 aa).

2 helical membrane-spanning segments follow: residues 3–23 and 57–77; these read PIVA…AAIG and FAFM…LLFA.

Belongs to the ATPase C chain family. As to quaternary structure, F-type ATPases have 2 components, F(1) - the catalytic core - and F(0) - the membrane proton channel. F(1) has five subunits: alpha(3), beta(3), gamma(1), delta(1), epsilon(1). F(0) has four main subunits: a(1), b(1), b'(1) and c(10-14). The alpha and beta chains form an alternating ring which encloses part of the gamma chain. F(1) is attached to F(0) by a central stalk formed by the gamma and epsilon chains, while a peripheral stalk is formed by the delta, b and b' chains.

The protein localises to the plastid. The protein resides in the chloroplast thylakoid membrane. Functionally, f(1)F(0) ATP synthase produces ATP from ADP in the presence of a proton or sodium gradient. F-type ATPases consist of two structural domains, F(1) containing the extramembraneous catalytic core and F(0) containing the membrane proton channel, linked together by a central stalk and a peripheral stalk. During catalysis, ATP synthesis in the catalytic domain of F(1) is coupled via a rotary mechanism of the central stalk subunits to proton translocation. Its function is as follows. Key component of the F(0) channel; it plays a direct role in translocation across the membrane. A homomeric c-ring of between 10-14 subunits forms the central stalk rotor element with the F(1) delta and epsilon subunits. The chain is ATP synthase subunit c, chloroplastic from Chlorella vulgaris (Green alga).